Here is a 112-residue protein sequence, read N- to C-terminus: MAVWEGKKYKMEKSEGFDDYMKALGVGMVLRKLGNSISPTVELVKNGDEYTFNTLSPSRTRRSSSSWAMEFDEETVDGRMVKSVCTFDGNKLIHEQKGEKRPRSCASSLPPI.

It belongs to the calycin superfamily. Fatty-acid binding protein (FABP) family.

The polypeptide is Probable fatty acid-binding protein (Anopheles gambiae (African malaria mosquito)).